A 295-amino-acid chain; its full sequence is Phosphatidylserine decarboxylase proenzyme (295 aa).

Residues Asp101, His158, and Ser262 each act as charge relay system; for autoendoproteolytic cleavage activity in the active site. The Schiff-base intermediate with substrate; via pyruvic acid; for decarboxylase activity role is filled by Ser262. Residue Ser262 is modified to Pyruvic acid (Ser); by autocatalysis.

This sequence belongs to the phosphatidylserine decarboxylase family. PSD-B subfamily. Prokaryotic type I sub-subfamily. Heterodimer of a large membrane-associated beta subunit and a small pyruvoyl-containing alpha subunit. Pyruvate is required as a cofactor. In terms of processing, is synthesized initially as an inactive proenzyme. Formation of the active enzyme involves a self-maturation process in which the active site pyruvoyl group is generated from an internal serine residue via an autocatalytic post-translational modification. Two non-identical subunits are generated from the proenzyme in this reaction, and the pyruvate is formed at the N-terminus of the alpha chain, which is derived from the carboxyl end of the proenzyme. The autoendoproteolytic cleavage occurs by a canonical serine protease mechanism, in which the side chain hydroxyl group of the serine supplies its oxygen atom to form the C-terminus of the beta chain, while the remainder of the serine residue undergoes an oxidative deamination to produce ammonia and the pyruvoyl prosthetic group on the alpha chain. During this reaction, the Ser that is part of the protease active site of the proenzyme becomes the pyruvoyl prosthetic group, which constitutes an essential element of the active site of the mature decarboxylase.

The protein localises to the cell membrane. The enzyme catalyses a 1,2-diacyl-sn-glycero-3-phospho-L-serine + H(+) = a 1,2-diacyl-sn-glycero-3-phosphoethanolamine + CO2. Its pathway is phospholipid metabolism; phosphatidylethanolamine biosynthesis; phosphatidylethanolamine from CDP-diacylglycerol: step 2/2. Functionally, catalyzes the formation of phosphatidylethanolamine (PtdEtn) from phosphatidylserine (PtdSer). The chain is Phosphatidylserine decarboxylase proenzyme from Pasteurella multocida (strain Pm70).